A 656-amino-acid chain; its full sequence is ATP-dependent RNA helicase MRH4, mitochondrial (656 aa).

Residues 1–46 constitute a mitochondrion transit peptide; it reads MTSFSHLSRLRMSAFLPHVCLQCRLKTVSSLPAQSSASSLLQAVRH. Positions 42–125 are disordered; that stretch reads QAVRHASSAR…KDKDGSEKKQ (84 aa). Polar residues predominate over residues 60–71; the sequence is MTLSPNVAQSTV. Residues 96–125 are compositionally biased toward basic and acidic residues; the sequence is NLRDRQRPRSQAELKRTSFKKDKDGSEKKQ. Residues 157-190 carry the Q motif motif; sequence TSFDQFDLLPSVRQSVYDSALPGLEYVTPTPIQR. The Helicase ATP-binding domain maps to 210–431; the sequence is QEDMPRFDQY…RERFPQIRRL (222 aa). 223–230 is an ATP binding site; sequence AETGSGKT. The segment at 246–270 is disordered; sequence AKDKEEEERMAKEELEKEQEQAKEK. The short motif at 378–381 is the DEAD box element; the sequence is DEAD. The 177-residue stretch at 480-656 folds into the Helicase C-terminal domain; sequence DVGYQVTGQK…EAMYRGQALI (177 aa).

The protein belongs to the DEAD box helicase family. MRH4 subfamily.

Its subcellular location is the mitochondrion. It carries out the reaction ATP + H2O = ADP + phosphate + H(+). In terms of biological role, ATP-binding RNA helicase involved in mitochondrial RNA metabolism. Required for maintenance of mitochondrial DNA. The protein is ATP-dependent RNA helicase MRH4, mitochondrial (MRH4) of Coccidioides immitis (strain RS) (Valley fever fungus).